A 332-amino-acid polypeptide reads, in one-letter code: Holliday junction branch migration complex subunit RuvB (332 aa).

Residues 1–181 (MSRILDNEMM…FGITGHMEYY (181 aa)) are large ATPase domain (RuvB-L). Residues L20, R21, G62, K65, T66, T67, 128–130 (EDF), R171, Y181, and R218 each bind ATP. T66 lines the Mg(2+) pocket. The tract at residues 182-252 (AHADLTEIVE…ITDKALTMLD (71 aa)) is small ATPAse domain (RuvB-S). The interval 255–332 (HEGLDYVDQK…EHLGYEYSEK (78 aa)) is head domain (RuvB-H). DNA contacts are provided by R291, R310, R312, and R315.

Belongs to the RuvB family. As to quaternary structure, homohexamer. Forms an RuvA(8)-RuvB(12)-Holliday junction (HJ) complex. HJ DNA is sandwiched between 2 RuvA tetramers; dsDNA enters through RuvA and exits via RuvB. An RuvB hexamer assembles on each DNA strand where it exits the tetramer. Each RuvB hexamer is contacted by two RuvA subunits (via domain III) on 2 adjacent RuvB subunits; this complex drives branch migration. In the full resolvosome a probable DNA-RuvA(4)-RuvB(12)-RuvC(2) complex forms which resolves the HJ.

The protein localises to the cytoplasm. It carries out the reaction ATP + H2O = ADP + phosphate + H(+). The RuvA-RuvB-RuvC complex processes Holliday junction (HJ) DNA during genetic recombination and DNA repair, while the RuvA-RuvB complex plays an important role in the rescue of blocked DNA replication forks via replication fork reversal (RFR). RuvA specifically binds to HJ cruciform DNA, conferring on it an open structure. The RuvB hexamer acts as an ATP-dependent pump, pulling dsDNA into and through the RuvAB complex. RuvB forms 2 homohexamers on either side of HJ DNA bound by 1 or 2 RuvA tetramers; 4 subunits per hexamer contact DNA at a time. Coordinated motions by a converter formed by DNA-disengaged RuvB subunits stimulates ATP hydrolysis and nucleotide exchange. Immobilization of the converter enables RuvB to convert the ATP-contained energy into a lever motion, pulling 2 nucleotides of DNA out of the RuvA tetramer per ATP hydrolyzed, thus driving DNA branch migration. The RuvB motors rotate together with the DNA substrate, which together with the progressing nucleotide cycle form the mechanistic basis for DNA recombination by continuous HJ branch migration. Branch migration allows RuvC to scan DNA until it finds its consensus sequence, where it cleaves and resolves cruciform DNA. The protein is Holliday junction branch migration complex subunit RuvB of Streptococcus pneumoniae serotype 4 (strain ATCC BAA-334 / TIGR4).